The primary structure comprises 93 residues: MLTVNSYFDESVKSIGFEQNKNAISVGVMLPGSYTFGTNAAEKMTVVTGSLTIKRSSDADWVTFSSGEFFSVEGSSSFDVNVEIETAYLCEYL.

This sequence belongs to the nucleoside phosphorylase PpnP family.

It carries out the reaction a purine D-ribonucleoside + phosphate = a purine nucleobase + alpha-D-ribose 1-phosphate. The enzyme catalyses adenosine + phosphate = alpha-D-ribose 1-phosphate + adenine. It catalyses the reaction cytidine + phosphate = cytosine + alpha-D-ribose 1-phosphate. The catalysed reaction is guanosine + phosphate = alpha-D-ribose 1-phosphate + guanine. It carries out the reaction inosine + phosphate = alpha-D-ribose 1-phosphate + hypoxanthine. The enzyme catalyses thymidine + phosphate = 2-deoxy-alpha-D-ribose 1-phosphate + thymine. It catalyses the reaction uridine + phosphate = alpha-D-ribose 1-phosphate + uracil. The catalysed reaction is xanthosine + phosphate = alpha-D-ribose 1-phosphate + xanthine. Functionally, catalyzes the phosphorolysis of diverse nucleosides, yielding D-ribose 1-phosphate and the respective free bases. Can use uridine, adenosine, guanosine, cytidine, thymidine, inosine and xanthosine as substrates. Also catalyzes the reverse reactions. This is Pyrimidine/purine nucleoside phosphorylase from Aliivibrio salmonicida (strain LFI1238) (Vibrio salmonicida (strain LFI1238)).